A 474-amino-acid chain; its full sequence is Tocopherol cyclase, chloroplastic (474 aa).

A chloroplast-targeting transit peptide spans 1 to 65; that stretch reads MNLAVAAALP…TPTPQDRSLR (65 aa).

Present in all green tissues, both in bundle sheath and in mesophyll cells.

Its subcellular location is the plastid. It localises to the chloroplast. The enzyme catalyses gamma-tocopherol = 2,3-dimethyl-6-phytylbenzene-1,4-diol. It participates in cofactor biosynthesis; tocopherol biosynthesis. Involved in the synthesis of tocopherols (vitamin E), which presumably protect photosynthetic complexes from oxidative stress. Catalyzes the conversion of 2,3-dimethyl-5-phytyl-1,4-hydroquinone (DMPQ) to gamma-tocopherol. The sequence is that of Tocopherol cyclase, chloroplastic from Zea mays (Maize).